Here is a 778-residue protein sequence, read N- to C-terminus: Phenylalanine--tRNA ligase beta subunit (778 aa).

The 112-residue stretch at 39 to 150 folds into the tRNA-binding domain; it reads YEVPQKIVFG…GKYKIGEEVS (112 aa). The B5 domain occupies 391 to 467; that stretch reads HEDKIISLNK…RLVGIDNIPS (77 aa). The Mg(2+) site is built by aspartate 445, aspartate 451, glutamate 454, and glutamate 455. The FDX-ACB domain occupies 686–778; it reads SKYQASFRDL…LKNQLGVGIR (93 aa).

Belongs to the phenylalanyl-tRNA synthetase beta subunit family. Type 1 subfamily. As to quaternary structure, tetramer of two alpha and two beta subunits. Requires Mg(2+) as cofactor.

The protein resides in the cytoplasm. The catalysed reaction is tRNA(Phe) + L-phenylalanine + ATP = L-phenylalanyl-tRNA(Phe) + AMP + diphosphate + H(+). The protein is Phenylalanine--tRNA ligase beta subunit of Sulfurimonas denitrificans (strain ATCC 33889 / DSM 1251) (Thiomicrospira denitrificans (strain ATCC 33889 / DSM 1251)).